Here is a 152-residue protein sequence, read N- to C-terminus: Ribosome maturation factor RimP (152 aa).

Belongs to the RimP family.

Its subcellular location is the cytoplasm. Its function is as follows. Required for maturation of 30S ribosomal subunits. This chain is Ribosome maturation factor RimP, found in Desulfitobacterium hafniense (strain Y51).